We begin with the raw amino-acid sequence, 416 residues long: D-amino acid dehydrogenase (416 aa).

3–17 (VTILGAGVIGVTTAY) contributes to the FAD binding site.

The protein belongs to the DadA oxidoreductase family. It depends on FAD as a cofactor.

It catalyses the reaction a D-alpha-amino acid + A + H2O = a 2-oxocarboxylate + AH2 + NH4(+). Its pathway is amino-acid degradation; D-alanine degradation; NH(3) and pyruvate from D-alanine: step 1/1. Its function is as follows. Oxidative deamination of D-amino acids. The polypeptide is D-amino acid dehydrogenase (Rhizobium rhizogenes (strain K84 / ATCC BAA-868) (Agrobacterium radiobacter)).